The sequence spans 227 residues: Terpene cyclase ltmB (227 aa).

7 helical membrane-spanning segments follow: residues 20-40 (LAET…VLMI), 51-71 (MALI…IIYP), 76-96 (VELA…TSAA), 113-133 (AGLI…ALAM), 135-155 (IGPA…LSIG), 173-195 (LWSS…WRYW), and 206-226 (LILW…VCLL).

It belongs to the paxB family.

The protein localises to the membrane. It functions in the pathway secondary metabolite biosynthesis. In terms of biological role, terpene cyclase; part of the gene cluster that mediates the biosynthesis of lolitrems, indole-diterpene mycotoxins that are potent tremorgens in mammals, and are synthesized by clavicipitaceous fungal endophytes in association with their grass hosts. The geranylgeranyl diphosphate (GGPP) synthase ltmG is proposed to catalyze the first step in lolitrem biosynthesis. LtmG catalyzes a series of iterative condensations of isopentenyl diphosphate (IPP) with dimethylallyl diphosphate (DMAPP), geranyl diphosphate (GPP), and farnesyl diphosphate (FPP), to form GGPP. GGPP then condenses with indole-3-glycerol phosphate to form 3-geranylgeranylindole, an acyclic intermediate, to be incorporated into paxilline. Either ltmG or ltmC could be responsible for this step, as both are putative prenyl transferases. The FAD-dependent monooxygenase ltmM then catalyzes the epoxidation of the two terminal alkenes of the geranylgeranyl moiety, which is subsequently cyclized by ltmB, to paspaline. The cytochrome P450 monooxygenases ltmQ and ltmP can sequentially oxidize paspaline to terpendole E and terpendole F. Alternatively, ltmP converts paspaline to an intermediate which is oxidized by ltmQ to terpendole F. LtmF, ltmK, ltmE and ltmJ appear to be unique to the epichloe endophytes. The prenyltransferase ltmF is involved in the 27-hydroxyl-O-prenylation. The cytochrome P450 monooxygenase ltmK is required for the oxidative acetal ring formation. The multi-functional prenyltransferase ltmE is required for C20- and C21-prenylations of the indole ring of paspalanes and acts together with the cytochrome P450 monooxygenase ltmJ to yield lolitremanes by multiple oxidations and ring closures. The stereoisomer pairs of lolitriol and lolitrem N or lolitrem B and lolitrem F may be attributed to variations in the way in which ring closure can occur under the action of ltmJ. While the major product of this pathway is lolitrem B, the prenyl transferases and cytochrome P450 monooxygenases identified in this pathway have a remarkable versatility in their regio- and stereo-specificities to generate a diverse range of metabolites that are products of a metabolic grid rather than a linear pathway. The protein is Terpene cyclase ltmB of Epichloe festucae var. lolii (Neotyphodium lolii).